The primary structure comprises 661 residues: Ubiquitin-associated and SH3 domain-containing protein A (661 aa).

The UBA domain maps to 15–60 (KLKSRSSPSLLEPLLAMGFPVHTALKALAATGRKTAEEALAWLHDH). The SH3 domain occupies 276–341 (VHYQTLRALF…PENYTDRASE (66 aa)). The tract at residues 395–661 (RKSVLVVRHG…FNWRNWISGN (267 aa)) is phosphatase-like.

In terms of assembly, homodimer or homooligomer. Interacts with CBL. Part of a complex containing CBL and activated EGFR. Interacts with ubiquitin and with mono-ubiquitinated proteins. Interacts with dynamin. In terms of tissue distribution, highest expression of UBASH3A in tissues belonging to the immune system, including spleen, peripheral blood leukocytes, thymus and bone marrow.

It is found in the cytoplasm. It localises to the nucleus. Functionally, interferes with CBL-mediated down-regulation and degradation of receptor-type tyrosine kinases. Promotes accumulation of activated target receptors, such as T-cell receptors, EGFR and PDGFRB, on the cell surface. Exhibits negligible protein tyrosine phosphatase activity at neutral pH. May act as a dominant-negative regulator of UBASH3B-dependent dephosphorylation. May inhibit dynamin-dependent endocytic pathways by functionally sequestering dynamin via its SH3 domain. The sequence is that of Ubiquitin-associated and SH3 domain-containing protein A (UBASH3A) from Homo sapiens (Human).